The following is a 950-amino-acid chain: Protein lin-54 homolog (950 aa).

Disordered stretches follow at residues 1–63 (MDTS…DSLN), 366–387 (NASATSSTTHTTGGQTPSTSSG), 500–523 (ASKPASAASSSATPSASQELPRKH), 533–552 (KQSASVSSEASDSSDAGPEA), and 638–702 (VENK…LPPG). A compositionally biased stretch (acidic residues) spans 10–26 (SLDDTEPLPELSFEDFL). Over residues 29-39 (TSEKSSQHMEI) the composition is skewed to basic and acidic residues. The span at 40 to 55 (EALDSEEDNIGGEDLA) shows a compositional bias: acidic residues. Composition is skewed to low complexity over residues 366–386 (NASATSSTTHTTGGQTPSTSS), 500–516 (ASKPASAASSSATPSAS), 535–548 (SASVSSEASDSSDA), and 661–682 (QQQSKHQQLQAQAKQRIRQQQL). The CRC domain maps to 737–849 (RRKHCNCSKS…KCVGCRNMED (113 aa)).

This sequence belongs to the lin-54 family. In terms of assembly, component of the DREAM complex at least composed of Myb, Caf1-55, mip40, mip120, mip130, E2f2, Dp, Rbf, Rbf2, lin-52, HDAC1/Rpd3 and l(3)mbt.

It is found in the nucleus. Its function is as follows. Component of the DREAM complex, a multiprotein complex that can both act as a transcription activator or repressor depending on the context. In follicle cells, the complex plays a central role in the site-specific DNA replication at the chorion loci. During development, the complex represses transcription of developmentally controlled E2F target genes. The sequence is that of Protein lin-54 homolog (mip120) from Drosophila melanogaster (Fruit fly).